A 267-amino-acid polypeptide reads, in one-letter code: 3-methyl-2-oxobutanoate hydroxymethyltransferase (267 aa).

Residues aspartate 46 and aspartate 85 each contribute to the Mg(2+) site. Residues 46–47 (DS), aspartate 85, and lysine 115 contribute to the 3-methyl-2-oxobutanoate site. Position 117 (glutamate 117) interacts with Mg(2+). The Proton acceptor role is filled by glutamate 184.

The protein belongs to the PanB family. In terms of assembly, homodecamer; pentamer of dimers. Mg(2+) is required as a cofactor.

It localises to the cytoplasm. It carries out the reaction 3-methyl-2-oxobutanoate + (6R)-5,10-methylene-5,6,7,8-tetrahydrofolate + H2O = 2-dehydropantoate + (6S)-5,6,7,8-tetrahydrofolate. Its pathway is cofactor biosynthesis; (R)-pantothenate biosynthesis; (R)-pantoate from 3-methyl-2-oxobutanoate: step 1/2. Its function is as follows. Catalyzes the reversible reaction in which hydroxymethyl group from 5,10-methylenetetrahydrofolate is transferred onto alpha-ketoisovalerate to form ketopantoate. This chain is 3-methyl-2-oxobutanoate hydroxymethyltransferase, found in Geobacter sulfurreducens (strain ATCC 51573 / DSM 12127 / PCA).